A 266-amino-acid chain; its full sequence is 15-hydroxyprostaglandin dehydrogenase [NAD(+)] (266 aa).

NAD(+) contacts are provided by residues 12-20 (GAAQGIGRA), 36-37 (DW), 63-65 (CDV), and asparagine 91. Substrate is bound by residues serine 138 and glutamine 148. Tyrosine 151 (proton acceptor) is an active-site residue. Residues 151-155 (YCASK) and 186-188 (VNT) contribute to the NAD(+) site.

It belongs to the short-chain dehydrogenases/reductases (SDR) family. In terms of assembly, homodimer.

It is found in the cytoplasm. The catalysed reaction is prostaglandin E2 + NAD(+) = 15-oxoprostaglandin E2 + NADH + H(+). It catalyses the reaction (15S)-hydroxy-(5Z,8Z,11Z,13E)-eicosatetraenoate + NAD(+) = 15-oxo-(5Z,8Z,11Z,13E)-eicosatetraenoate + NADH + H(+). The enzyme catalyses (11R)-hydroxy-(5Z,8Z,12E,14Z)-eicosatetraenoate + NAD(+) = 11-oxo-(5Z,8Z,12E,14Z)-eicosatetraenoate + NADH + H(+). It carries out the reaction lipoxin A4 + NAD(+) = 15-oxo-(5S,6R)-dihydroxy-(7E,9E,11Z,13E)-eicosatetraenoate + NADH + H(+). The catalysed reaction is 15-oxo-(5S,6R)-dihydroxy-(7E,9E,11Z)-eicosatrienoate + NADH + H(+) = (5S,6R,15S)-trihydroxy-(7E,9E,11Z)-eicosatrienoate + NAD(+). It catalyses the reaction prostaglandin A1 + NAD(+) = 15-oxo-prostaglandin A1 + NADH + H(+). The enzyme catalyses prostaglandin E1 + NAD(+) = 15-oxoprostaglandin E1 + NADH + H(+). It carries out the reaction 14-hydroxy-(4Z,7Z,10Z,12E,16Z,19Z)-docosahexaenoate + NAD(+) = 14-oxo-(4Z,7Z,10Z,12E,16Z,19Z)-docosahexaenoate + NADH + H(+). The catalysed reaction is resolvin E1 + NAD(+) = 18-oxo-resolvin E1 + NADH + H(+). It catalyses the reaction resolvin D1 + NAD(+) = 8-oxoresolvin D1 + NADH + H(+). The enzyme catalyses resolvin D1 + NAD(+) = 17-oxoresolvin D1 + NADH + H(+). It carries out the reaction resolvin D2 + NAD(+) = 7-oxoresolvin D2 + NADH + H(+). The catalysed reaction is resolvin D2 + NAD(+) = 16-oxoresolvin D2 + NADH + H(+). Catalyzes the NAD-dependent dehydrogenation (oxidation) of a broad array of hydroxylated polyunsaturated fatty acids (mainly eicosanoids and docosanoids, including prostaglandins, lipoxins and resolvins), yielding their corresponding keto (oxo) metabolites. Decreases the levels of the pro-proliferative prostaglandins such as prostaglandin E2 (whose activity is increased in cancer because of an increase in the expression of cyclooxygenase 2) and generates oxo-fatty acid products that can profoundly influence cell function by abrogating pro-inflammatory cytokine expression. Converts resolvins E1, D1 and D2 to their oxo products, which represents a mode of resolvin inactivation. Resolvin E1 plays important roles during the resolution phase of acute inflammation, while resolvins D1 and D2 have a unique role in obesity-induced adipose inflammation. The polypeptide is 15-hydroxyprostaglandin dehydrogenase [NAD(+)] (HPGD) (Macaca fascicularis (Crab-eating macaque)).